Consider the following 226-residue polypeptide: Ribonuclease 3 (226 aa).

One can recognise an RNase III domain in the interval 6–128 (ANKIQQILGY…LIGSIYLDSN (123 aa)). Residue Glu41 participates in Mg(2+) binding. Residue Asp45 is part of the active site. The Mg(2+) site is built by Asn114 and Glu117. Residue Glu117 is part of the active site. The DRBM domain occupies 155-225 (DPKTRLQEYL…ARKALIKLGV (71 aa)).

Belongs to the ribonuclease III family. In terms of assembly, homodimer. The cofactor is Mg(2+).

The protein resides in the cytoplasm. It catalyses the reaction Endonucleolytic cleavage to 5'-phosphomonoester.. Digests double-stranded RNA. Involved in the processing of primary rRNA transcript to yield the immediate precursors to the large and small rRNAs (23S and 16S). Processes some mRNAs, and tRNAs when they are encoded in the rRNA operon. Processes pre-crRNA and tracrRNA of type II CRISPR loci if present in the organism. The polypeptide is Ribonuclease 3 (Buchnera aphidicola subsp. Schizaphis graminum (strain Sg)).